The chain runs to 242 residues: 7-cyano-7-deazaguanine synthase (242 aa).

The tract at residues 1 to 22 (MNSSSNEKNKDLNRKNFSSKTD) is disordered. Residue 32 to 42 (LSGGLDSTTCL) coordinates ATP. Positions 212, 221, 224, and 227 each coordinate Zn(2+).

Belongs to the QueC family. Zn(2+) is required as a cofactor.

The catalysed reaction is 7-carboxy-7-deazaguanine + NH4(+) + ATP = 7-cyano-7-deazaguanine + ADP + phosphate + H2O + H(+). Its pathway is purine metabolism; 7-cyano-7-deazaguanine biosynthesis. Functionally, catalyzes the ATP-dependent conversion of 7-carboxy-7-deazaguanine (CDG) to 7-cyano-7-deazaguanine (preQ(0)). The sequence is that of 7-cyano-7-deazaguanine synthase from Leptospira interrogans serogroup Icterohaemorrhagiae serovar copenhageni (strain Fiocruz L1-130).